The following is a 783-amino-acid chain: Flavin carrier protein 2 (783 aa).

Residues 1–22 (MIFLNTFARCLLTCFVLCSGTA) form the signal peptide. Residues 23-182 (RSSDTNDTTP…NGKTVQTKYA (160 aa)) lie on the Lumenal side of the membrane. N-linked (GlcNAc...) asparagine glycosylation is found at Asn28, Asn65, Asn81, and Asn156. Residues 183–203 (AWPIAAISGVGVLTSGFVSVI) form a helical membrane-spanning segment. Topologically, residues 204–211 (GYSATAAH) are cytoplasmic. Residues 212-232 (IASNSISLFIYFQNLAITAMM) form a helical membrane-spanning segment. At 233-347 (GVSRVPPIAA…AYLANIELSN (115 aa)) the chain is on the lumenal side. Asn323 carries an N-linked (GlcNAc...) asparagine glycan. Residues 348-368 (FFLTGIVFFLFFLFVVVVSLI) traverse the membrane as a helical segment. Topologically, residues 369–402 (FFKALLEVLTRARILKETSNFFQYRKNWGSIIKG) are cytoplasmic. Residues 403-423 (TLFRLSIIAFPQVSLLAIWEF) traverse the membrane as a helical segment. Residues 424–430 (TQVNSPA) are Lumenal-facing. Residues 431–451 (IVVDAVVILLIITGLLVYGTI) form a helical membrane-spanning segment. Over 452-492 (RVFIKGRESLRLYKNPAYLLYSDTYFLNKFGFLYVQFKADK) the chain is Cytoplasmic. A helical membrane pass occupies residues 493 to 513 (FWWLLPLLSYAFLRSLFVAVL). Over 514 to 521 (QNQGKAQA) the chain is Lumenal. A helical membrane pass occupies residues 522-542 (MIIFVIELAYFVCLCWIRPYL). The Cytoplasmic segment spans residues 543-547 (DKRTN). The chain crosses the membrane as a helical span at residues 548-568 (VFNIAIHLVNLINAFFFLFFS). Residues 569 to 581 (NLFKQPAVVSSVM) lie on the Lumenal side of the membrane. The helical transmembrane segment at 582-602 (AVILFVLNAVFALFLLLFTIV) threads the bilayer. The Cytoplasmic portion of the chain corresponds to 603–783 (TCTLALLHRN…ENARNNNPYL (181 aa)). Residues 681-783 (RLFDDETSSS…ENARNNNPYL (103 aa)) form a disordered region. Positions 688–697 (SSSSFKQNSS) are enriched in low complexity. 2 stretches are compositionally biased toward polar residues: residues 704-748 (VTEQ…TSSL) and 756-767 (YLGNSNKSYSHF). Positions 768-783 (NNNGSNENARNNNPYL) are enriched in low complexity.

Belongs to the transient receptor potential (TRP) ion channel family.

The protein localises to the endoplasmic reticulum membrane. Its function is as follows. May be responsible for the transport of FAD into the endoplasmic reticulum lumen, where it is required for oxidative protein folding. The chain is Flavin carrier protein 2 (FLC2) from Saccharomyces cerevisiae (strain ATCC 204508 / S288c) (Baker's yeast).